The following is a 108-amino-acid chain: Colipase B (108 aa).

Positions 1–13 (LALLLVALAVAYA) are cleaved as a signal peptide. A propeptide spans 14–18 (VPDPR) (enterostatin, activation peptide). 5 cysteine pairs are disulfide-bonded: cysteine 30-cysteine 41, cysteine 36-cysteine 52, cysteine 40-cysteine 74, cysteine 62-cysteine 82, and cysteine 76-cysteine 100. Tryptophan 65 is a binding site for taurodeoxycholate.

It belongs to the colipase family. In terms of assembly, forms a 1:1 stoichiometric complex with pancreatic lipase. As to expression, expressed by the pancreas.

It is found in the secreted. Its function is as follows. Colipase is a cofactor of pancreatic lipase. It allows the lipase to anchor itself to the lipid-water interface. Without colipase the enzyme is washed off by bile salts, which have an inhibitory effect on the lipase. In terms of biological role, enterostatin has a biological activity as a satiety signal. This Equus caballus (Horse) protein is Colipase B (CLPS2).